The sequence spans 257 residues: uncharacterized protein (257 aa).

Residue S127 is modified to Phosphoserine. Disordered regions lie at residues 146-174 (HEDPKPSSTYNSSISAPPEDFKQDGEDDG) and 210-231 (AREKATELKQRRQEQATNRREK). Polar residues predominate over residues 151 to 160 (PSSTYNSSIS). Residues 196–257 (HVRMVREVHE…QQQQEDEQKT (62 aa)) adopt a coiled-coil conformation.

This is an uncharacterized protein from Arabidopsis thaliana (Mouse-ear cress).